Here is a 140-residue protein sequence, read N- to C-terminus: Nucleoside diphosphate kinase (140 aa).

ATP-binding residues include lysine 11, phenylalanine 59, arginine 87, threonine 93, arginine 104, and asparagine 114. The active-site Pros-phosphohistidine intermediate is the histidine 117.

Belongs to the NDK family. Homotetramer. Mg(2+) serves as cofactor.

Its subcellular location is the cytoplasm. It catalyses the reaction a 2'-deoxyribonucleoside 5'-diphosphate + ATP = a 2'-deoxyribonucleoside 5'-triphosphate + ADP. The catalysed reaction is a ribonucleoside 5'-diphosphate + ATP = a ribonucleoside 5'-triphosphate + ADP. Major role in the synthesis of nucleoside triphosphates other than ATP. The ATP gamma phosphate is transferred to the NDP beta phosphate via a ping-pong mechanism, using a phosphorylated active-site intermediate. This Methylorubrum populi (strain ATCC BAA-705 / NCIMB 13946 / BJ001) (Methylobacterium populi) protein is Nucleoside diphosphate kinase.